A 566-amino-acid chain; its full sequence is UvrABC system protein C (566 aa).

The 78-residue stretch at 16-93 folds into the GIY-YIG domain; the sequence is EKPGVYLFKK…IQQYKPRYNV (78 aa). Residues 199 to 234 form the UVR domain; that stretch reads AEVLPKLYEKIEEFSKELMFEKCAHIRDQIIALENL.

Belongs to the UvrC family. Interacts with UvrB in an incision complex.

The protein resides in the cytoplasm. Its function is as follows. The UvrABC repair system catalyzes the recognition and processing of DNA lesions. UvrC both incises the 5' and 3' sides of the lesion. The N-terminal half is responsible for the 3' incision and the C-terminal half is responsible for the 5' incision. This chain is UvrABC system protein C, found in Aquifex aeolicus (strain VF5).